Consider the following 543-residue polypeptide: MAELTIDPASIRKALDDFVSSYKPSDTPTQEVGYVATAGDGIAHVTGLPGCMANELLTFEDGTLGLAFNLDAREIGVVILGDFAGIEEGQEVRRTGEVLSVPVGDGYLGRVVDPLGKPLDGLGEIQGIEGRRILEAQAPDVMHRHPVDEPLSTGLKAIDAMTPIGRGQRQLIIGDRQTGKTAIAIDTIINQKANWESGDPKKQVRCIYVAIGQKGSTIASVKQSLEDAGAMEYTTIVASPAADSAGFKYIAPYTGSAIGQHWMYNGKHVLIVFDDLSKQAEAYRSISLLLRRPPGREAYPGDVFYLHSRLLERCAKVSDDLGGGSMTGLPIVETKANDVSAYIPTNVISITDGQIFLQSDLFNANQRPAVDVGISVSRVGGAAQTKALKKVSGTLKISLAQYRSLESFAMFASDLDAASKAQLTRGAHLTELLKQPQFHPYSPEQEVVSVWTGTHGKLDDLDLKDVLPFEQGLLDYIDHNTDILKTIRETEEFTADTEAALDKAVDEFRSTFVSSAGKPLVEKKPDVDKAAPVDQEKIVAGEK.

174-181 contributes to the ATP binding site; that stretch reads GDRQTGKT. Residues 521–543 form a disordered region; sequence VEKKPDVDKAAPVDQEKIVAGEK.

The protein belongs to the ATPase alpha/beta chains family. F-type ATPases have 2 components, CF(1) - the catalytic core - and CF(0) - the membrane proton channel. CF(1) has five subunits: alpha(3), beta(3), gamma(1), delta(1), epsilon(1). CF(0) has three main subunits: a(1), b(2) and c(9-12). The alpha and beta chains form an alternating ring which encloses part of the gamma chain. CF(1) is attached to CF(0) by a central stalk formed by the gamma and epsilon chains, while a peripheral stalk is formed by the delta and b chains.

The protein localises to the cell membrane. It catalyses the reaction ATP + H2O + 4 H(+)(in) = ADP + phosphate + 5 H(+)(out). Functionally, produces ATP from ADP in the presence of a proton gradient across the membrane. The alpha chain is a regulatory subunit. The sequence is that of ATP synthase subunit alpha from Bifidobacterium longum (strain DJO10A).